We begin with the raw amino-acid sequence, 70 residues long: U-scoloptoxin(04)-Er3a (70 aa).

The signal sequence occupies residues 1–24 (MAAIRNLLILTMLLIVCVSWNADA).

The protein belongs to the scoloptoxin-04 family. In terms of processing, contains 2 disulfide bonds. Expressed by the venom gland.

The protein resides in the secreted. The chain is U-scoloptoxin(04)-Er3a from Ethmostigmus rubripes (Giant centipede).